A 508-amino-acid chain; its full sequence is Maturase K (508 aa).

Belongs to the intron maturase 2 family. MatK subfamily.

It is found in the plastid. It localises to the chloroplast. Functionally, usually encoded in the trnK tRNA gene intron. Probably assists in splicing its own and other chloroplast group II introns. The polypeptide is Maturase K (Pelargonium hortorum (Common geranium)).